Here is a 491-residue protein sequence, read N- to C-terminus: UDP-N-acetylmuramoyl-L-alanyl-D-glutamate--2,6-diaminopimelate ligase (491 aa).

Serine 30 is a binding site for UDP-N-acetyl-alpha-D-muramoyl-L-alanyl-D-glutamate. 108-114 serves as a coordination point for ATP; sequence GTNGKTT. Residues asparagine 149, 150–151, serine 177, and arginine 185 contribute to the UDP-N-acetyl-alpha-D-muramoyl-L-alanyl-D-glutamate site; that span reads TT. N6-carboxylysine is present on lysine 217. Meso-2,6-diaminopimelate-binding positions include arginine 383, 407 to 410, glycine 457, and glutamate 461; that span reads DNPR. Residues 407–410 carry the Meso-diaminopimelate recognition motif motif; it reads DNPR.

This sequence belongs to the MurCDEF family. MurE subfamily. The cofactor is Mg(2+). In terms of processing, carboxylation is probably crucial for Mg(2+) binding and, consequently, for the gamma-phosphate positioning of ATP.

The protein resides in the cytoplasm. The catalysed reaction is UDP-N-acetyl-alpha-D-muramoyl-L-alanyl-D-glutamate + meso-2,6-diaminopimelate + ATP = UDP-N-acetyl-alpha-D-muramoyl-L-alanyl-gamma-D-glutamyl-meso-2,6-diaminopimelate + ADP + phosphate + H(+). Its pathway is cell wall biogenesis; peptidoglycan biosynthesis. Catalyzes the addition of meso-diaminopimelic acid to the nucleotide precursor UDP-N-acetylmuramoyl-L-alanyl-D-glutamate (UMAG) in the biosynthesis of bacterial cell-wall peptidoglycan. This Bacillus cereus (strain ATCC 14579 / DSM 31 / CCUG 7414 / JCM 2152 / NBRC 15305 / NCIMB 9373 / NCTC 2599 / NRRL B-3711) protein is UDP-N-acetylmuramoyl-L-alanyl-D-glutamate--2,6-diaminopimelate ligase.